Consider the following 368-residue polypeptide: tRNA/tmRNA (uracil-C(5))-methyltransferase (368 aa).

Q192, Y220, N225, E241, and D301 together coordinate S-adenosyl-L-methionine. C326 serves as the catalytic Nucleophile. The active-site Proton acceptor is E360.

It belongs to the class I-like SAM-binding methyltransferase superfamily. RNA M5U methyltransferase family. TrmA subfamily.

It carries out the reaction uridine(54) in tRNA + S-adenosyl-L-methionine = 5-methyluridine(54) in tRNA + S-adenosyl-L-homocysteine + H(+). The catalysed reaction is uridine(341) in tmRNA + S-adenosyl-L-methionine = 5-methyluridine(341) in tmRNA + S-adenosyl-L-homocysteine + H(+). Its function is as follows. Dual-specificity methyltransferase that catalyzes the formation of 5-methyluridine at position 54 (m5U54) in all tRNAs, and that of position 341 (m5U341) in tmRNA (transfer-mRNA). This is tRNA/tmRNA (uracil-C(5))-methyltransferase from Actinobacillus pleuropneumoniae serotype 7 (strain AP76).